Here is a 348-residue protein sequence, read N- to C-terminus: Ferrochelatase (348 aa).

Positions 218 and 299 each coordinate Fe cation.

Belongs to the ferrochelatase family.

Its subcellular location is the cytoplasm. The enzyme catalyses heme b + 2 H(+) = protoporphyrin IX + Fe(2+). Its pathway is porphyrin-containing compound metabolism; protoheme biosynthesis; protoheme from protoporphyrin-IX: step 1/1. Functionally, catalyzes the ferrous insertion into protoporphyrin IX. The polypeptide is Ferrochelatase (Methylocella silvestris (strain DSM 15510 / CIP 108128 / LMG 27833 / NCIMB 13906 / BL2)).